The sequence spans 567 residues: Asparagine--tRNA ligase, chloroplastic/mitochondrial (567 aa).

Residues 113 to 191 (NIMGWVRTLR…VELKVEKIIV (79 aa)) constitute a DNA-binding region (OB).

It belongs to the class-II aminoacyl-tRNA synthetase family.

It is found in the plastid. It localises to the chloroplast. The protein resides in the mitochondrion. The enzyme catalyses tRNA(Asn) + L-asparagine + ATP = L-asparaginyl-tRNA(Asn) + AMP + diphosphate + H(+). The sequence is that of Asparagine--tRNA ligase, chloroplastic/mitochondrial from Arabidopsis thaliana (Mouse-ear cress).